Here is a 341-residue protein sequence, read N- to C-terminus: RNA 3'-terminal phosphate cyclase (341 aa).

Residues Gln-102 and 283 to 287 (HLADQ) each bind ATP. The active-site Tele-AMP-histidine intermediate is His-308.

This sequence belongs to the RNA 3'-terminal cyclase family. Type 1 subfamily.

The protein localises to the cytoplasm. The enzyme catalyses a 3'-end 3'-phospho-ribonucleotide-RNA + ATP = a 3'-end 2',3'-cyclophospho-ribonucleotide-RNA + AMP + diphosphate. Functionally, catalyzes the conversion of 3'-phosphate to a 2',3'-cyclic phosphodiester at the end of RNA. The mechanism of action of the enzyme occurs in 3 steps: (A) adenylation of the enzyme by ATP; (B) transfer of adenylate to an RNA-N3'P to produce RNA-N3'PP5'A; (C) and attack of the adjacent 2'-hydroxyl on the 3'-phosphorus in the diester linkage to produce the cyclic end product. The biological role of this enzyme is unknown but it is likely to function in some aspects of cellular RNA processing. In Ectopseudomonas mendocina (strain ymp) (Pseudomonas mendocina), this protein is RNA 3'-terminal phosphate cyclase.